The chain runs to 1832 residues: Putative transcription factor capicua (1832 aa).

Serine 41 and serine 49 each carry phosphoserine. Disordered stretches follow at residues 66–121 (ANQS…EVGS), 135–227 (STVG…AHPH), 323–353 (QQQQQHQQLQQQQQLQQQQQSPPQMPLNHNN), 389–427 (NQRQKQQQEEPDDQLDDDVFETTTPGISANSKKQTAAMR), 444–493 (DGAA…IRRP), 563–619 (DRRK…GGQG), 690–739 (RERV…SGGE), 784–845 (QPTG…VSAP), 874–938 (PMHH…EDDE), 1069–1105 (TSTLSSSSSNPANNEAPNKFSNFPTQHQPTTTTTISC), 1151–1178 (GQDEEEEEDEGNAEKQENPKVAGKEQVT), 1457–1602 (DGGM…STAA), 1632–1668 (QPEDCQSPSAIAVPSSPRVYGTNYRKKNTAPPPVQKL), 1701–1733 (LESSDQTGRSPRTPKTPLQSARSDASEKGHRKV), and 1789–1817 (ASCTPHSAGPNTPSDSNSSSTTLSASSTS). Low complexity predominate over residues 96–121 (NANNNSSNNNTSSSNNNNNSNWEVGS). Positions 172–186 (PPPPPPASLPAPSAP) are enriched in pro residues. Composition is skewed to low complexity over residues 187 to 203 (PTSGSSSSHNSVGHATS), 211 to 223 (QQQHQQQQQHQQQ), and 323 to 342 (QQQQQHQQLQQQQQLQQQQQ). The segment covering 397–408 (EEPDDQLDDDVF) has biased composition (acidic residues). Positions 409–422 (ETTTPGISANSKKQ) are enriched in polar residues. The segment covering 446 to 484 (AAGAPATSAAKRRSQSLSALQQQQQQQQQAGAAGTAAGQ) has biased composition (low complexity). The HMG box DNA-binding region spans 490–558 (IRRPMNAFMI…AHFKLHPEWK (69 aa)). The span at 610–619 (GGSGSCGGQG) shows a compositional bias: gly residues. Residues 834 to 1832 (GSASGGGVVS…TSAADVFQYY (999 aa)) form an interaction with gro region. Residues 903-914 (ESSEKDKPALDD) are compositionally biased toward basic and acidic residues. Positions 915-938 (QERDEVEEEDEDEEDDDEDDEDDE) are enriched in acidic residues. The segment covering 1078–1091 (NPANNEAPNKFSNF) has biased composition (polar residues). Over residues 1092 to 1105 (PTQHQPTTTTTISC) the composition is skewed to low complexity. A compositionally biased stretch (low complexity) spans 1462 to 1471 (GCASAAASGG). Residues 1503-1525 (LSQSKSESNVSFGANLGASNGQH) show a composition bias toward polar residues. Positions 1547 to 1589 (NSSNLSSALPTPTSSTTTPNSDEQLPLTPTTSSSNSNLNQQQP) are enriched in low complexity. Threonine 1716 is subject to Phosphothreonine. Basic and acidic residues predominate over residues 1724 to 1733 (DASEKGHRKV). A compositionally biased stretch (polar residues) spans 1789 to 1799 (ASCTPHSAGPN). The segment covering 1800–1817 (TPSDSNSSSTTLSASSTS) has biased composition (low complexity).

In terms of assembly, interacts with gro. Expressed in the central region of embryos. Also expressed in ovarian follicle cells, the wing imaginal disks and the wing pouch.

Its subcellular location is the nucleus. Transcriptional repressor required for the specification of numerous cell types during embryonic development. Required for terminal patterning of early embryos. May associate with gro to repress tll and hkb, restricting their expression to embryonic terminal poles where they initiate correct development of head and tail structures. Required for dorsoventral patterning of oocytes and early embryos. Cooperates with dl to repress zen and other dorsal specific genes within the embryo and promotes expression of the ventralizing factor pip in ovarian follicle cells. Required during wing development for the specification of intervein areas, where it mediates localized repression of vein specific genes such as aos, dpp and vvl. This Drosophila melanogaster (Fruit fly) protein is Putative transcription factor capicua (cic).